Here is a 55-residue protein sequence, read N- to C-terminus: Cortexin domain containing 2 (55 aa).

The chain crosses the membrane as a helical span at residues 16-36 (FAIAFVVLLFLFLIVMIFRCA).

It is found in the membrane. In Homo sapiens (Human), this protein is Cortexin domain containing 2.